Reading from the N-terminus, the 155-residue chain is UPF0260 protein NGR_c07710 (155 aa).

This sequence belongs to the UPF0260 family.

The sequence is that of UPF0260 protein NGR_c07710 from Sinorhizobium fredii (strain NBRC 101917 / NGR234).